The sequence spans 138 residues: MRLTQGTFSFLPDLTDAQIQKQVQYAVSKKWAVSVEYTDDPHPRNSFWELWGLPLFDVKDASALMYEIAACRKAKPNYYIKVNAFDNTRGVESCCLSFIINRPINEPGFHLERQEVQGRNILYTIKSYAVNKPEGSRY.

The protein belongs to the RuBisCO small chain family. Heterohexadecamer of 8 large and 8 small subunits.

The protein resides in the plastid. It is found in the chloroplast. Functionally, ruBisCO catalyzes two reactions: the carboxylation of D-ribulose 1,5-bisphosphate, the primary event in carbon dioxide fixation, as well as the oxidative fragmentation of the pentose substrate in the photorespiration process. Both reactions occur simultaneously and in competition at the same active site. Although the small subunit is not catalytic it is essential for maximal activity. In Porphyridium aerugineum (Red microalga), this protein is Ribulose bisphosphate carboxylase small subunit.